The chain runs to 397 residues: GPI mannosyltransferase 1 (397 aa).

9 helical membrane-spanning segments follow: residues 5 to 25, 79 to 99, 111 to 128, 156 to 176, 193 to 213, 257 to 277, 307 to 327, 330 to 350, and 362 to 382; these read ECLLVLAGLLARVGFFSYGIY, WVHFGKFIFVLFDLLAGVMVM, LILASLWLLNPVVITVST, GFVYGVAIHFKIYPIIYALPI, LTMGIATLATLVGCGIGMYYI, WAEFAFLPQLFICAAVTYVLW, YFIWYLLFLPSFLLDTTLSGA, IFLIFLWVGTQAWWLYNGYLL, and LFSACVTFFLANVYLLAQFIL.

This sequence belongs to the PIGM family.

Its subcellular location is the endoplasmic reticulum membrane. It participates in glycolipid biosynthesis; glycosylphosphatidylinositol-anchor biosynthesis. Functionally, mannosyltransferase involved in glycosylphosphatidylinositol-anchor biosynthesis. Transfers the first alpha-1,4-mannose to GlcN-acyl-PI during GPI precursor assembly. Required for cell wall integrity. This chain is GPI mannosyltransferase 1 (GPI14), found in Eremothecium gossypii (strain ATCC 10895 / CBS 109.51 / FGSC 9923 / NRRL Y-1056) (Yeast).